Consider the following 330-residue polypeptide: Heat-inducible transcription repressor HrcA (330 aa).

The protein belongs to the HrcA family.

Negative regulator of class I heat shock genes (grpE-dnaK-dnaJ and groELS operons). Prevents heat-shock induction of these operons. The polypeptide is Heat-inducible transcription repressor HrcA (Synechococcus sp. (strain RCC307)).